We begin with the raw amino-acid sequence, 148 residues long: MAAHKRLQKEITDMLKTPPSWCSAHLVDDNLQKWKATVQGPEGSPFEKGVFSMDIDIPADYPFKPPTLKFTTKIYHPNIKTSDGAICAEVFSTWSPQLKILDVLTTIRSILTDPNPDNPLETEIAQQFKTDRNAFNKTAKEWTKKYAK.

Residues 2 to 148 enclose the UBC core domain; that stretch reads AAHKRLQKEI…AKEWTKKYAK (147 aa). The Glycyl thioester intermediate role is filled by C87.

The protein belongs to the ubiquitin-conjugating enzyme family. In terms of assembly, interacts with mkkA (via F-box/WD40 repeat domains).

The enzyme catalyses S-ubiquitinyl-[E1 ubiquitin-activating enzyme]-L-cysteine + [E2 ubiquitin-conjugating enzyme]-L-cysteine = [E1 ubiquitin-activating enzyme]-L-cysteine + S-ubiquitinyl-[E2 ubiquitin-conjugating enzyme]-L-cysteine.. The protein operates within protein modification; protein ubiquitination. Involved in protein ubiquitination and degradation during development. Mediates protein ubiquitination at the mound and finger stage required for subsequent development and may be an essential component of the developmental transition between the induction of postaggregative gene expression and subsequent cell-type differentiation and morphogenesis. ubcB and ubpB differentially control ubiquitination/deubiquitination and degradation of mkkA protein in a cell-type-specific and temporally regulated manner. This is Ubiquitin conjugating enzyme E2 B (ubcB) from Dictyostelium discoideum (Social amoeba).